We begin with the raw amino-acid sequence, 446 residues long: Exodeoxyribonuclease 7 large subunit (446 aa).

The protein belongs to the XseA family. In terms of assembly, heterooligomer composed of large and small subunits.

It localises to the cytoplasm. It catalyses the reaction Exonucleolytic cleavage in either 5'- to 3'- or 3'- to 5'-direction to yield nucleoside 5'-phosphates.. In terms of biological role, bidirectionally degrades single-stranded DNA into large acid-insoluble oligonucleotides, which are then degraded further into small acid-soluble oligonucleotides. The chain is Exodeoxyribonuclease 7 large subunit from Streptococcus equi subsp. zooepidemicus (strain MGCS10565).